The primary structure comprises 520 residues: Keratin, type II cytoskeletal 78 (520 aa).

Residues 1 to 110 (MSLSPCRAQR…DPQFQVVRTQ (110 aa)) form a head region. The tract at residues 111-146 (ETQEIRTLNNQFASFIDKVRFLEQQNKVLETKWHLL) is coil 1A. An IF rod domain is found at 111–424 (ETQEIRTLNN…RLLEGEECRM (314 aa)). The linker 1 stretch occupies residues 147-165 (QQQGLSGSQQGLEPVFEAC). Residues 166-258 (LDQLRKQLEQ…LNEEELGQLQ (93 aa)) are coil 1B. Residues 259 to 281 (TQASDTSVVLSMDNNRYLDFSSI) form a linker 12 region. A coil 2 region spans residues 282 to 421 (ITEVRARYEE…TYRRLLEGEE (140 aa)). Residues 422-520 (CRMSGECTSQ…ESSLKTSITY (99 aa)) form a tail region.

Belongs to the intermediate filament family. In terms of assembly, heterotetramer of two type I and two type II keratins. As to expression, in non-keratinising esophageal and vaginal epithelium, strongly expressed in the basal and parabasal/lower suprabasal cell layers with considerably decreased expression in the mid/upper suprabasal layers (at protein level). A similar gradient from basal to lower suprabasal layers is seen in the partially keratinised dorsal tongue epithelium, in the scalp and in the plantar epidermis (at protein level). Extension of expression into the suprabasal compartments is distinctly more pronounced in non-keratinising epithelia than in keratinising epithelia and epidermis (at protein level). In scalp sections, present in the interfollicular epidermis and infundibulum including the entire outer root sheath of the hair follicles and also in the sebocytes (at protein level). In sweat glands, expressed in peripheral and luminal cells of the lower duct and in peripheral cells of the middle/upper duct with no expression observed in luminal cells (at protein level). In embryos at the 14th week of pregnancy, detected in basal and parabasal layers but is absent from the uppermost epidermal layer (at protein level). Expressed in tongue epithelium.

The polypeptide is Keratin, type II cytoskeletal 78 (KRT78) (Homo sapiens (Human)).